Here is a 436-residue protein sequence, read N- to C-terminus: Histidinol dehydrogenase (436 aa).

Positions 237, 259, and 262 each coordinate substrate. Residues glutamine 259 and histidine 262 each coordinate Zn(2+). Active-site proton acceptor residues include glutamate 327 and histidine 328. Substrate contacts are provided by histidine 328, aspartate 361, glutamate 415, and histidine 420. Aspartate 361 is a Zn(2+) binding site. Histidine 420 provides a ligand contact to Zn(2+).

Belongs to the histidinol dehydrogenase family. It depends on Zn(2+) as a cofactor.

It carries out the reaction L-histidinol + 2 NAD(+) + H2O = L-histidine + 2 NADH + 3 H(+). It functions in the pathway amino-acid biosynthesis; L-histidine biosynthesis; L-histidine from 5-phospho-alpha-D-ribose 1-diphosphate: step 9/9. Functionally, catalyzes the sequential NAD-dependent oxidations of L-histidinol to L-histidinaldehyde and then to L-histidine. The polypeptide is Histidinol dehydrogenase (Helicobacter hepaticus (strain ATCC 51449 / 3B1)).